The sequence spans 191 residues: MQLNELNCVILCGGKSSRMGQDKSKLILKNQNLTQFQVEKFSKIFKNVYVSAKEDKFENHFSLIKDSLEFEVYSPMLALYSILSNFKNEFVFVLSVDSPKVGENELLKMLPFLEQNYKIIIAKTPLHKHPLCGFYHSSLAQTCKNFLEKNEQKIGLLFSEIKTKFVEFEDEDAFLNLNFYEEYEKFKSELR.

Residues 11–13, Lys-23, Asp-66, and Asp-97 contribute to the GTP site; that span reads LCG. Asp-97 is a binding site for Mg(2+).

It belongs to the MobA family. As to quaternary structure, monomer. The cofactor is Mg(2+).

It localises to the cytoplasm. The catalysed reaction is Mo-molybdopterin + GTP + H(+) = Mo-molybdopterin guanine dinucleotide + diphosphate. In terms of biological role, transfers a GMP moiety from GTP to Mo-molybdopterin (Mo-MPT) cofactor (Moco or molybdenum cofactor) to form Mo-molybdopterin guanine dinucleotide (Mo-MGD) cofactor. This is Molybdenum cofactor guanylyltransferase from Campylobacter jejuni subsp. jejuni serotype O:6 (strain 81116 / NCTC 11828).